The primary structure comprises 195 residues: HTH-type transcriptional regulator BetI (195 aa).

The 61-residue stretch at 8–68 folds into the HTH tetR-type domain; it reads PIRRRQLIDA…ATMRDITSQL (61 aa). The segment at residues 31-50 is a DNA-binding region (H-T-H motif); that stretch reads TIAQIARRAGVSTGIISHYF.

Its pathway is amine and polyamine biosynthesis; betaine biosynthesis via choline pathway [regulation]. In terms of biological role, repressor involved in the biosynthesis of the osmoprotectant glycine betaine. It represses transcription of the choline transporter BetT and the genes of BetAB involved in the synthesis of glycine betaine. The sequence is that of HTH-type transcriptional regulator BetI from Klebsiella pneumoniae (strain 342).